The sequence spans 429 residues: Ubiquinone hydroxylase UbiL (429 aa).

The interval 1 to 22 (MSEPLLRGLAAGDPPSATGPVT) is disordered.

It belongs to the UbiH/COQ6 family. FAD serves as cofactor.

The enzyme catalyses a 2-(all-trans-polyprenyl)phenol + NADPH + O2 + H(+) = a 3-(all-trans-polyprenyl)benzene-1,2-diol + NADP(+) + H2O. It functions in the pathway cofactor biosynthesis; ubiquinone biosynthesis. Catalyzes the hydroxylation of two positions of the aromatic ring during ubiquinone biosynthesis. The polypeptide is Ubiquinone hydroxylase UbiL (Rhodospirillum rubrum (strain ATCC 11170 / ATH 1.1.1 / DSM 467 / LMG 4362 / NCIMB 8255 / S1)).